Reading from the N-terminus, the 829-residue chain is Periplasmic nitrate reductase (829 aa).

Positions 1–30 (MKMTRRAFVKANAAASAAAVAGITLPASAA) form a signal peptide, tat-type signal. One can recognise a 4Fe-4S Mo/W bis-MGD-type domain in the interval 41-97 (ITWDKAPCRFCGTGCSVLVGTQNGKVVATQGDPEAPVNKGLNCIKGYFLSKIMYGQD). [4Fe-4S] cluster is bound by residues cysteine 48, cysteine 51, cysteine 55, and cysteine 83. Mo-bis(molybdopterin guanine dinucleotide)-binding positions include lysine 85, glutamine 152, asparagine 177, cysteine 181, 214 to 221 (WGSNMAEM), 245 to 249 (STYYH), 264 to 266 (QSD), methionine 374, glutamine 378, asparagine 484, 510 to 511 (SD), lysine 533, aspartate 560, and 718 to 727 (TGRVLEHWHT). Phenylalanine 794 serves as a coordination point for substrate. 2 residues coordinate Mo-bis(molybdopterin guanine dinucleotide): asparagine 802 and lysine 819.

The protein belongs to the prokaryotic molybdopterin-containing oxidoreductase family. NasA/NapA/NarB subfamily. Component of the periplasmic nitrate reductase NapAB complex composed of NapA and NapB. It depends on [4Fe-4S] cluster as a cofactor. The cofactor is Mo-bis(molybdopterin guanine dinucleotide). Post-translationally, predicted to be exported by the Tat system. The position of the signal peptide cleavage has not been experimentally proven.

It localises to the periplasm. The enzyme catalyses 2 Fe(II)-[cytochrome] + nitrate + 2 H(+) = 2 Fe(III)-[cytochrome] + nitrite + H2O. Its function is as follows. Catalytic subunit of the periplasmic nitrate reductase complex NapAB. Receives electrons from NapB and catalyzes the reduction of nitrate to nitrite. This chain is Periplasmic nitrate reductase, found in Vibrio parahaemolyticus serotype O3:K6 (strain RIMD 2210633).